The primary structure comprises 110 residues: Large ribosomal subunit protein uL22 (110 aa).

The protein belongs to the universal ribosomal protein uL22 family. Part of the 50S ribosomal subunit.

Functionally, this protein binds specifically to 23S rRNA; its binding is stimulated by other ribosomal proteins, e.g. L4, L17, and L20. It is important during the early stages of 50S assembly. It makes multiple contacts with different domains of the 23S rRNA in the assembled 50S subunit and ribosome. Its function is as follows. The globular domain of the protein is located near the polypeptide exit tunnel on the outside of the subunit, while an extended beta-hairpin is found that lines the wall of the exit tunnel in the center of the 70S ribosome. The polypeptide is Large ribosomal subunit protein uL22 (Variovorax paradoxus (strain S110)).